Consider the following 252-residue polypeptide: Ribonuclease HII (252 aa).

In terms of domain architecture, RNase H type-2 spans 68-252 (EYVAGLDEVG…FGPVRDRLRS (185 aa)). A divalent metal cation contacts are provided by D74, E75, and D165.

The protein belongs to the RNase HII family. Mn(2+) serves as cofactor. It depends on Mg(2+) as a cofactor.

The protein resides in the cytoplasm. It catalyses the reaction Endonucleolytic cleavage to 5'-phosphomonoester.. Endonuclease that specifically degrades the RNA of RNA-DNA hybrids. This is Ribonuclease HII from Lacticaseibacillus paracasei (strain ATCC 334 / BCRC 17002 / CCUG 31169 / CIP 107868 / KCTC 3260 / NRRL B-441) (Lactobacillus paracasei).